Consider the following 205-residue polypeptide: Enhancer of split mgamma protein (205 aa).

Residues Y15–M72 enclose the bHLH domain. One can recognise an Orange domain in the interval F93 to L126. The short motif at W202–W205 is the WRPW motif element.

Homodimer. Heterodimer with dpn. Might form higher-order oligomers. Transcription repression requires formation of a complex with a corepressor protein (Groucho). In terms of tissue distribution, expressed in sensory organ precursors in the wing, leg and eye imaginal disk.

It localises to the nucleus. Its function is as follows. Transcriptional repressor of genes that require a bHLH protein for their transcription. May serve as a transcriptional regulator of the Achaete-scute complex (AS-C) genes. Contributes to the neural-epidermal lineage decision during early neurogenesis. Part of the Notch signaling pathway, plays a role in neuroblasts proliferation in embryos and larvae. In the larval brain, together with other self-renewal transcriptional repressors such as klu and dpn, required for type II neuroblast self-renewal and for maintaining erm in an inactive state in intermediate neural progenitors (INP) derived from type II neuroblasts. The sequence is that of Enhancer of split mgamma protein from Drosophila melanogaster (Fruit fly).